A 280-amino-acid chain; its full sequence is 2-dehydro-3-deoxyphosphooctonate aldolase 2 (280 aa).

Belongs to the KdsA family.

The protein resides in the cytoplasm. It catalyses the reaction D-arabinose 5-phosphate + phosphoenolpyruvate + H2O = 3-deoxy-alpha-D-manno-2-octulosonate-8-phosphate + phosphate. Its pathway is carbohydrate biosynthesis; 3-deoxy-D-manno-octulosonate biosynthesis; 3-deoxy-D-manno-octulosonate from D-ribulose 5-phosphate: step 2/3. It participates in bacterial outer membrane biogenesis; lipopolysaccharide biosynthesis. This chain is 2-dehydro-3-deoxyphosphooctonate aldolase 2 (kdsA2), found in Pseudomonas putida (strain ATCC 47054 / DSM 6125 / CFBP 8728 / NCIMB 11950 / KT2440).